We begin with the raw amino-acid sequence, 226 residues long: Cytochrome c oxidase subunit 2 (226 aa).

Residues 1 to 25 (MNTWLLSLQNSNSPTYDMMIFFHDF) are Mitochondrial intermembrane-facing. The chain crosses the membrane as a helical span at residues 26 to 47 (TMMILIFITLLILFIMFTMINN). The Mitochondrial matrix segment spans residues 48-61 (NLINRFLLQGHFIE). A helical transmembrane segment spans residues 62-81 (LIWTITPMIILILIAIPSFK). The Mitochondrial intermembrane segment spans residues 82 to 226 (ILYLTDEMFN…YFKNWLKSFL (145 aa)). Cu cation-binding residues include His160, Cys195, Glu197, Cys199, His203, and Met206. Residue Glu197 coordinates Mg(2+).

This sequence belongs to the cytochrome c oxidase subunit 2 family. In terms of assembly, component of the cytochrome c oxidase (complex IV, CIV), a multisubunit enzyme composed of a catalytic core of 3 subunits and several supernumerary subunits. The complex exists as a monomer or a dimer and forms supercomplexes (SCs) in the inner mitochondrial membrane with ubiquinol-cytochrome c oxidoreductase (cytochrome b-c1 complex, complex III, CIII). Cu cation serves as cofactor.

The protein localises to the mitochondrion inner membrane. It carries out the reaction 4 Fe(II)-[cytochrome c] + O2 + 8 H(+)(in) = 4 Fe(III)-[cytochrome c] + 2 H2O + 4 H(+)(out). In terms of biological role, component of the cytochrome c oxidase, the last enzyme in the mitochondrial electron transport chain which drives oxidative phosphorylation. The respiratory chain contains 3 multisubunit complexes succinate dehydrogenase (complex II, CII), ubiquinol-cytochrome c oxidoreductase (cytochrome b-c1 complex, complex III, CIII) and cytochrome c oxidase (complex IV, CIV), that cooperate to transfer electrons derived from NADH and succinate to molecular oxygen, creating an electrochemical gradient over the inner membrane that drives transmembrane transport and the ATP synthase. Cytochrome c oxidase is the component of the respiratory chain that catalyzes the reduction of oxygen to water. Electrons originating from reduced cytochrome c in the intermembrane space (IMS) are transferred via the dinuclear copper A center (CU(A)) of subunit 2 and heme A of subunit 1 to the active site in subunit 1, a binuclear center (BNC) formed by heme A3 and copper B (CU(B)). The BNC reduces molecular oxygen to 2 water molecules using 4 electrons from cytochrome c in the IMS and 4 protons from the mitochondrial matrix. The polypeptide is Cytochrome c oxidase subunit 2 (COII) (Lasius sp).